The primary structure comprises 486 residues: Glutamyl-tRNA(Gln) amidotransferase subunit A (486 aa).

Active-site charge relay system residues include lysine 76 and serine 151. Residue serine 175 is the Acyl-ester intermediate of the active site.

The protein belongs to the amidase family. GatA subfamily. In terms of assembly, heterotrimer of A, B and C subunits.

The enzyme catalyses L-glutamyl-tRNA(Gln) + L-glutamine + ATP + H2O = L-glutaminyl-tRNA(Gln) + L-glutamate + ADP + phosphate + H(+). Allows the formation of correctly charged Gln-tRNA(Gln) through the transamidation of misacylated Glu-tRNA(Gln) in organisms which lack glutaminyl-tRNA synthetase. The reaction takes place in the presence of glutamine and ATP through an activated gamma-phospho-Glu-tRNA(Gln). This chain is Glutamyl-tRNA(Gln) amidotransferase subunit A, found in Nitrosomonas eutropha (strain DSM 101675 / C91 / Nm57).